The primary structure comprises 1415 residues: Bridge-like lipid transfer protein family member 3B (1415 aa).

The region spanning Gly-3–Cys-94 is the Chorein N-terminal domain. Disordered regions lie at residues Ser-267 to Pro-300 and Lys-882 to Val-904. A compositionally biased stretch (polar residues) spans Ala-275–Pro-300. Positions Lys-1367–Leu-1404 form a coiled coil.

Its subcellular location is the cytoplasm. The protein localises to the cytosol. It localises to the early endosome. In terms of biological role, tube-forming lipid transport protein which mediates the transfer of lipids between membranes at organelle contact sites. Required for retrograde traffic of vesicle clusters in the early endocytic pathway to the Golgi complex. The polypeptide is Bridge-like lipid transfer protein family member 3B (bltp3b) (Xenopus laevis (African clawed frog)).